The following is a 334-amino-acid chain: Short-chain dehydrogenase/reductase (334 aa).

NADP(+) contacts are provided by L44, K68, D93, N120, and K152. Active-site proton donor residues include S176 and Y205. NADP(+) contacts are provided by Y205, K209, and N239. Residue K209 is the Lowers pKa of active site Tyr of the active site.

This sequence belongs to the short-chain dehydrogenases/reductases (SDR) family.

It functions in the pathway mycotoxin biosynthesis. In terms of biological role, short-chain dehydrogenase/reductase; part of the 2 gene clusters that mediate the biosynthesis of fusicoccins, diterpene glucosides that display phytohormone-like activity and function as potent activators of plasma membrane H(+)-ATPases in plants by modifying 14-3-3 proteins and cause the plant disease constriction canker. The first step in the pathway is performed by the fusicoccadiene synthase PaFS that possesses both prenyl transferase and terpene cyclase activity, converting isopentenyl diphosphate and dimethylallyl diphosphate into geranylgeranyl diphosphate (GGDP) and successively converting GGDP into fusicocca-2,10(14)-diene, a precursor for fusicoccin H. The second step is the oxidation at the C-8 position by the cytochrome P450 monooxygenase PaP450-2 to yield fusicocca-2,10(14)-diene-8-beta-ol. The cytochrome P450 monooxygenase PaP450-1 then catalyzes the hydroxylation at the C-16 position to produce fusicocca-2,10(14)-diene-8-beta,16-diol. The dioxygenase fc-dox then catalyzes the 16-oxydation of fusicocca-2,10(14)-diene-8-beta,16-diol to yield an aldehyde (8-beta-hydroxyfusicocca-1,10(14)-dien-16-al). The short-chain dehydrogenase/reductase fc-sdr catalyzes the reduction of the aldehyde to yield fusicocca-1,10(14)-diene-8-beta,16-diol. The next step is the hydroxylation at C-9 performed by the cytochrome P450 monooxygenase PaP450-3 that leads to fusicoccin H aglycon which is glycosylated to fusicoccin H by the O-glycosyltransferase PaGT. Hydroxylation at C-12 by the cytochrome P450 monooxygenase PaP450-4 leads then to the production of fusicoccin Q and is followed by methylation by the O-methyltransferase PaMT to yield fusicoccin P. Fusicoccin P is further converted to fusicoccin J via prenylation by the O-glucose prenyltransferase PaPT. Cytochrome P450 monooxygenase PaP450-5 then performs hydroxylation at C-19 to yield dideacetyl-fusicoccin A which is acetylated to 3'-O-deacetyl-fusicoccin A by the O-acetyltransferase PaAT-2. Finally, a another acetylation by the O-acetyltransferase PaAT-1 yields fusicoccin A. The sequence is that of Short-chain dehydrogenase/reductase from Phomopsis amygdali (Fusicoccum amygdali).